Here is a 400-residue protein sequence, read N- to C-terminus: Dual-specificity RNA methyltransferase RlmN (400 aa).

Glu-125 serves as the catalytic Proton acceptor. A Radical SAM core domain is found at Glu-131 to Leu-372. A disulfide bridge connects residues Cys-138 and Cys-375. Positions 145, 149, and 152 each coordinate [4Fe-4S] cluster. Residues Gly-201–Glu-202, Ser-233, Ser-255–His-257, and Asn-332 each bind S-adenosyl-L-methionine. Cys-375 acts as the S-methylcysteine intermediate in catalysis.

This sequence belongs to the radical SAM superfamily. RlmN family. The cofactor is [4Fe-4S] cluster.

Its subcellular location is the cytoplasm. The catalysed reaction is adenosine(2503) in 23S rRNA + 2 reduced [2Fe-2S]-[ferredoxin] + 2 S-adenosyl-L-methionine = 2-methyladenosine(2503) in 23S rRNA + 5'-deoxyadenosine + L-methionine + 2 oxidized [2Fe-2S]-[ferredoxin] + S-adenosyl-L-homocysteine. The enzyme catalyses adenosine(37) in tRNA + 2 reduced [2Fe-2S]-[ferredoxin] + 2 S-adenosyl-L-methionine = 2-methyladenosine(37) in tRNA + 5'-deoxyadenosine + L-methionine + 2 oxidized [2Fe-2S]-[ferredoxin] + S-adenosyl-L-homocysteine. Its function is as follows. Specifically methylates position 2 of adenine 2503 in 23S rRNA and position 2 of adenine 37 in tRNAs. m2A2503 modification seems to play a crucial role in the proofreading step occurring at the peptidyl transferase center and thus would serve to optimize ribosomal fidelity. In Bradyrhizobium diazoefficiens (strain JCM 10833 / BCRC 13528 / IAM 13628 / NBRC 14792 / USDA 110), this protein is Dual-specificity RNA methyltransferase RlmN.